The following is a 61-amino-acid chain: Small ribosomal subunit protein uS14 (61 aa).

Zn(2+) is bound by residues Cys24, Cys27, Cys40, and Cys43.

It belongs to the universal ribosomal protein uS14 family. Zinc-binding uS14 subfamily. In terms of assembly, part of the 30S ribosomal subunit. Contacts proteins S3 and S10. It depends on Zn(2+) as a cofactor.

Its function is as follows. Binds 16S rRNA, required for the assembly of 30S particles and may also be responsible for determining the conformation of the 16S rRNA at the A site. The protein is Small ribosomal subunit protein uS14 of Elusimicrobium minutum (strain Pei191).